A 100-amino-acid chain; its full sequence is Large ribosomal subunit protein uL23 (100 aa).

It belongs to the universal ribosomal protein uL23 family. In terms of assembly, part of the 50S ribosomal subunit. Contacts protein L29, and trigger factor when it is bound to the ribosome.

Its function is as follows. One of the early assembly proteins it binds 23S rRNA. One of the proteins that surrounds the polypeptide exit tunnel on the outside of the ribosome. Forms the main docking site for trigger factor binding to the ribosome. The protein is Large ribosomal subunit protein uL23 of Thermotoga maritima (strain ATCC 43589 / DSM 3109 / JCM 10099 / NBRC 100826 / MSB8).